We begin with the raw amino-acid sequence, 127 residues long: MORF4 family-associated protein 1 (127 aa).

Residues 76 to 97 form a disordered region; it reads ESALNHLQNPDDGAEGRGTKRC. Positions 92–126 form a coiled coil; sequence RGTKRCEKAEEKAKEIAKMAEMLVELVRRIEKSES.

The protein belongs to the MORF4 family-associated protein family. Found in a complex composed of MORF4L1, MRFAP1 and RB1. Interacts via its N-terminus with MORF4L1. Interacts with CSTB and MORF4L2.

It is found in the nucleus. The protein localises to the cytoplasm. Its subcellular location is the perinuclear region. In Bos taurus (Bovine), this protein is MORF4 family-associated protein 1.